A 300-amino-acid polypeptide reads, in one-letter code: Haloalkane dehalogenase 1 (300 aa).

Positions 47 to 176 (PPIVLLHGEP…FARYSPVLPA (130 aa)) constitute an AB hydrolase-1 domain. The active-site Nucleophile is aspartate 123. Residue aspartate 250 is the Proton donor of the active site. The active-site Proton acceptor is histidine 279.

Belongs to the haloalkane dehalogenase family. Type 1 subfamily. As to quaternary structure, monomer.

The enzyme catalyses 1-haloalkane + H2O = a halide anion + a primary alcohol + H(+). In terms of biological role, catalyzes hydrolytic cleavage of carbon-halogen bonds in halogenated aliphatic compounds, leading to the formation of the corresponding primary alcohols, halide ions and protons. The chain is Haloalkane dehalogenase 1 (dhmA1) from Mycobacterium bovis (strain ATCC BAA-935 / AF2122/97).